A 257-amino-acid polypeptide reads, in one-letter code: UPF0758 protein Bcenmc03_2526 (257 aa).

Positions Met-1–Gly-53 are disordered. Over residues Pro-37 to Glu-51 the composition is skewed to basic and acidic residues. Residues Gln-135–Leu-257 enclose the MPN domain. The Zn(2+) site is built by His-206, His-208, and Asp-219. The short motif at His-206–Asp-219 is the JAMM motif element.

The protein belongs to the UPF0758 family.

In Burkholderia orbicola (strain MC0-3), this protein is UPF0758 protein Bcenmc03_2526.